Here is a 75-residue protein sequence, read N- to C-terminus: Large ribosomal subunit protein bL31 (75 aa).

Belongs to the bacterial ribosomal protein bL31 family. Type A subfamily. Part of the 50S ribosomal subunit.

Binds the 23S rRNA. This chain is Large ribosomal subunit protein bL31, found in Zymomonas mobilis subsp. mobilis (strain ATCC 31821 / ZM4 / CP4).